We begin with the raw amino-acid sequence, 469 residues long: 3-isopropylmalate dehydratase large subunit (469 aa).

The [4Fe-4S] cluster site is built by Cys350, Cys410, and Cys413.

The protein belongs to the aconitase/IPM isomerase family. LeuC type 1 subfamily. In terms of assembly, heterodimer of LeuC and LeuD. [4Fe-4S] cluster serves as cofactor.

The catalysed reaction is (2R,3S)-3-isopropylmalate = (2S)-2-isopropylmalate. The protein operates within amino-acid biosynthesis; L-leucine biosynthesis; L-leucine from 3-methyl-2-oxobutanoate: step 2/4. In terms of biological role, catalyzes the isomerization between 2-isopropylmalate and 3-isopropylmalate, via the formation of 2-isopropylmaleate. In Rhizobium rhizogenes (strain K84 / ATCC BAA-868) (Agrobacterium radiobacter), this protein is 3-isopropylmalate dehydratase large subunit.